Consider the following 185-residue polypeptide: Large ribosomal subunit protein uL5 (185 aa).

It belongs to the universal ribosomal protein uL5 family. In terms of assembly, part of the 50S ribosomal subunit; part of the 5S rRNA/L5/L18/L25 subcomplex. Contacts the 5S rRNA and the P site tRNA. Forms a bridge to the 30S subunit in the 70S ribosome.

Its function is as follows. This is one of the proteins that bind and probably mediate the attachment of the 5S RNA into the large ribosomal subunit, where it forms part of the central protuberance. In the 70S ribosome it contacts protein S13 of the 30S subunit (bridge B1b), connecting the 2 subunits; this bridge is implicated in subunit movement. Contacts the P site tRNA; the 5S rRNA and some of its associated proteins might help stabilize positioning of ribosome-bound tRNAs. The polypeptide is Large ribosomal subunit protein uL5 (Rhizobium etli (strain CIAT 652)).